We begin with the raw amino-acid sequence, 385 residues long: Sensor histidine kinase Hik2 (385 aa).

One can recognise a GAF domain in the interval 11–131; it reads ALCRTQLELV…QQVAQTLAIA (121 aa). C13 is a [3Fe-4S] cluster binding site. Positions 142 to 270 are DHp domain, may sense NaCl; it reads SHSPAQPLDQ…PQLPPIWLEE (129 aa). One can recognise a Histidine kinase domain in the interval 158–381; the sequence is DLLHQLRNPV…AFTLAIPWQM (224 aa). H161 is modified (phosphohistidine; by autocatalysis).

Belongs to the chloroplast sensor kinase protein family. In terms of assembly, hexamers; upon treatment with 0.5 M NaCl only tetramers are seen. The tetramers are probably inactive. The cofactor is [3Fe-4S] cluster. Autophosphorylates, possibly on His-161.

The catalysed reaction is ATP + protein L-histidine = ADP + protein N-phospho-L-histidine.. Member of 2 two-component regulatory system(s) Hik2/Rre1 and Hik2/RppA. Transduces PQ (plastoquinone) redox signals to photosystem gene expression machinery during the adjustment of photosystem stoichiometry. Reduced PQ suppresses its autophosphorylation activity (i.e. kinase activity is higher under oxidizing conditions). As part of a two-component regulatory system with Rre1, controls expression of sigB and several other genes in response to hyperosmotic stress. May transfer phosphate to RppA in a possible Hik2/RppA two-component system. The sequence is that of Sensor histidine kinase Hik2 from Thermosynechococcus vestitus (strain NIES-2133 / IAM M-273 / BP-1).